We begin with the raw amino-acid sequence, 96 residues long: Small ribosomal subunit protein bS6 (96 aa).

Belongs to the bacterial ribosomal protein bS6 family.

Functionally, binds together with bS18 to 16S ribosomal RNA. The chain is Small ribosomal subunit protein bS6 from Streptococcus uberis (strain ATCC BAA-854 / 0140J).